A 177-amino-acid polypeptide reads, in one-letter code: Meiotically up-regulated gene 121 protein (177 aa).

Positions 1–23 (MKGFVVISRFILTLFILITPGLA) are cleaved as a signal peptide. N-linked (GlcNAc...) asparagine glycosylation is present at Asn-121.

The protein localises to the endoplasmic reticulum. It localises to the golgi apparatus. Has a role in meiosis. This is Meiotically up-regulated gene 121 protein (mug121) from Schizosaccharomyces pombe (strain 972 / ATCC 24843) (Fission yeast).